Reading from the N-terminus, the 95-residue chain is Aspartyl/glutamyl-tRNA(Asn/Gln) amidotransferase subunit C (95 aa).

The protein belongs to the GatC family. As to quaternary structure, heterotrimer of A, B and C subunits.

The catalysed reaction is L-glutamyl-tRNA(Gln) + L-glutamine + ATP + H2O = L-glutaminyl-tRNA(Gln) + L-glutamate + ADP + phosphate + H(+). It catalyses the reaction L-aspartyl-tRNA(Asn) + L-glutamine + ATP + H2O = L-asparaginyl-tRNA(Asn) + L-glutamate + ADP + phosphate + 2 H(+). In terms of biological role, allows the formation of correctly charged Asn-tRNA(Asn) or Gln-tRNA(Gln) through the transamidation of misacylated Asp-tRNA(Asn) or Glu-tRNA(Gln) in organisms which lack either or both of asparaginyl-tRNA or glutaminyl-tRNA synthetases. The reaction takes place in the presence of glutamine and ATP through an activated phospho-Asp-tRNA(Asn) or phospho-Glu-tRNA(Gln). In Rhodospirillum centenum (strain ATCC 51521 / SW), this protein is Aspartyl/glutamyl-tRNA(Asn/Gln) amidotransferase subunit C.